Reading from the N-terminus, the 142-residue chain is Small ribosomal subunit protein bS6 (142 aa).

A compositionally biased stretch (basic and acidic residues) spans 113-136 (IKKEPREPREPRAPREPKAEKIEE). A disordered region spans residues 113–142 (IKKEPREPREPRAPREPKAEKIEEQTFSEE).

Belongs to the bacterial ribosomal protein bS6 family.

Binds together with bS18 to 16S ribosomal RNA. The polypeptide is Small ribosomal subunit protein bS6 (Campylobacter curvus (strain 525.92)).